Reading from the N-terminus, the 83-residue chain is Cytochrome b559 subunit alpha (83 aa).

The chain crosses the membrane as a helical span at residues 21–35 (VIHSITIPSLFIAGW). His-23 serves as a coordination point for heme.

This sequence belongs to the PsbE/PsbF family. In terms of assembly, heterodimer of an alpha subunit and a beta subunit. PSII is composed of 1 copy each of membrane proteins PsbA, PsbB, PsbC, PsbD, PsbE, PsbF, PsbH, PsbI, PsbJ, PsbK, PsbL, PsbM, PsbT, PsbX, PsbY, PsbZ, Psb30/Ycf12, at least 3 peripheral proteins of the oxygen-evolving complex and a large number of cofactors. It forms dimeric complexes. Heme b serves as cofactor.

Its subcellular location is the plastid. The protein resides in the chloroplast thylakoid membrane. This b-type cytochrome is tightly associated with the reaction center of photosystem II (PSII). PSII is a light-driven water:plastoquinone oxidoreductase that uses light energy to abstract electrons from H(2)O, generating O(2) and a proton gradient subsequently used for ATP formation. It consists of a core antenna complex that captures photons, and an electron transfer chain that converts photonic excitation into a charge separation. This is Cytochrome b559 subunit alpha from Physcomitrium patens (Spreading-leaved earth moss).